The sequence spans 73 residues: UPF0235 protein PERMA_1406 (73 aa).

The protein belongs to the UPF0235 family.

The protein is UPF0235 protein PERMA_1406 of Persephonella marina (strain DSM 14350 / EX-H1).